Reading from the N-terminus, the 514-residue chain is Na(+)/H(+) antiporter NhaB (514 aa).

The next 12 membrane-spanning stretches (helical) occupy residues 23 to 43 (LALI…PFVA), 63 to 83 (PLLP…TSAA), 97 to 117 (LLLM…LFIF), 120 to 140 (LLLS…AAAF), 144 to 164 (FLDA…FYGI), 202 to 222 (LMMH…VGEP), 238 to 258 (FFLR…FTCV), 303 to 323 (AIIG…VGLI), 357 to 377 (LTVF…APII), 391 to 411 (LFYL…VGTI), 447 to 467 (ATPN…APLI), and 475 to 495 (VWMA…CVEF).

The protein belongs to the NhaB Na(+)/H(+) (TC 2.A.34) antiporter family.

The protein localises to the cell inner membrane. It carries out the reaction 2 Na(+)(in) + 3 H(+)(out) = 2 Na(+)(out) + 3 H(+)(in). Na(+)/H(+) antiporter that extrudes sodium in exchange for external protons. In Citrobacter koseri (strain ATCC BAA-895 / CDC 4225-83 / SGSC4696), this protein is Na(+)/H(+) antiporter NhaB.